Reading from the N-terminus, the 348-residue chain is Protein RecA (348 aa).

Residue 66–73 (GPESSGKT) participates in ATP binding.

This sequence belongs to the RecA family.

Its subcellular location is the cytoplasm. Its function is as follows. Can catalyze the hydrolysis of ATP in the presence of single-stranded DNA, the ATP-dependent uptake of single-stranded DNA by duplex DNA, and the ATP-dependent hybridization of homologous single-stranded DNAs. It interacts with LexA causing its activation and leading to its autocatalytic cleavage. This chain is Protein RecA, found in Neisseria gonorrhoeae (strain NCCP11945).